A 645-amino-acid polypeptide reads, in one-letter code: Synaptotagmin-16 (645 aa).

Disordered regions lie at residues 102–121 (AQNS…STMS), 144–192 (EHHL…DSDE), and 206–344 (QSFR…PSGV). Residues 167–177 (ETVNGKKQVNS) show a composition bias toward polar residues. Acidic residues predominate over residues 179–192 (GDDEELSTSSDSDE). The span at 287–303 (HQESSVVQSLRRQSTEG) shows a compositional bias: polar residues. Positions 350–469 (KCGDLDVIFE…HPEGEMKVTL (120 aa)) constitute a C2 1 domain. The segment at 478 to 503 (SSGGSPLSPSAVSHSDSTSSTQSLSH) is disordered. Residues 485 to 502 (SPSAVSHSDSTSSTQSLS) show a composition bias toward low complexity. One can recognise a C2 2 domain in the interval 505–640 (GAPELLVGLS…TKGQQICRWH (136 aa)).

It belongs to the synaptotagmin family. Homodimer. Can also form heterodimers. As to expression, expressed in brain.

Its function is as follows. May be involved in the trafficking and exocytosis of secretory vesicles in non-neuronal tissues. Is Ca(2+)-independent. In Homo sapiens (Human), this protein is Synaptotagmin-16 (SYT16).